The sequence spans 610 residues: Menin (610 aa).

The interaction with FANCD2 stretch occupies residues 214–390 (GVAERSWLYL…SLLEAGEERP (177 aa)). The interval 460-552 (REAEAAEAEE…SPPPEGPVLT (93 aa)) is disordered. The segment covering 484–500 (RRESKPEEPPPPKKPAL) has biased composition (basic and acidic residues). Ser-487 and Ser-543 each carry phosphoserine. Residue Thr-594 is modified to Phosphothreonine.

In terms of assembly, component of the MLL-HCF complex, at least composed of KMT2A/MLL1, MEN1, ASH2L, RBBP5, DPY30, WDR5, HCFC1 and HCFC2. Component of the menin-associated histone methyltransferase complex, at least composed of KMT2B/MLL4, MEN1, ASH2L, RBBP5, DPY30 and WDR5. Interacts with POLR2B. Interacts with POLR2A phosphorylated at 'Ser-5', but not with the unphosphorylated, nor 'Ser-2' phosphorylated POLR2A forms. Interacts with FANCD2 and DBF4. Interacts with SMAD3, but not with SMAD2, nor SMAD4. Directly interacts with NFKB1, NFKB2 and RELA. Interacts with JUND (via MBM motif); inhibits the interaction of JUND with MAPK10 and the phosphorylation of JUND by MAP kinases MAPK8 and MAPK10. Interacts with KMT2A (via MBM motif). The KMT2A-MEN1 complex interacts with PSIP1 with a greater affinity as MEN1 enhances interaction of KMT2A with PSIP1. In terms of tissue distribution, widely expressed, including in the pituitary, brain, large intestine, spleen, kidney, adrenal gland, ovary, testis, thymus, lung, epididymis, bone marrow, pancreatic islets and placenta.

It localises to the nucleus. In terms of biological role, essential component of a MLL/SET1 histone methyltransferase (HMT) complex, a complex that specifically methylates 'Lys-4' of histone H3 (H3K4). Functions as a transcriptional regulator. Binds to the TERT promoter and represses telomerase expression. Represses JUND-mediated transcriptional activation on AP1 sites, as well as that mediated by NFKB subunit RELA. Positively regulates HOXC8 and HOXC6 gene expression. May be involved in normal hematopoiesis through the activation of HOXA9 expression. May be involved in DNA repair. Plays a role in TGFB1-mediated inhibition of cell-proliferation, possibly regulating SMAD3 transcriptional activity. This is Menin (Men1) from Rattus norvegicus (Rat).